Consider the following 392-residue polypeptide: S-adenosylmethionine synthase (392 aa).

H22 provides a ligand contact to ATP. D24 contributes to the Mg(2+) binding site. E50 is a binding site for K(+). L-methionine-binding residues include E63 and Q106. Positions 106-116 (QSPDITQGVTL) are flexible loop. ATP contacts are provided by residues 170–172 (DGK), 236–237 (KF), D245, 251–252 (RK), A268, and K272. Position 245 (D245) interacts with L-methionine. Position 276 (K276) interacts with L-methionine.

The protein belongs to the AdoMet synthase family. In terms of assembly, homotetramer; dimer of dimers. Requires Mg(2+) as cofactor. K(+) serves as cofactor.

It is found in the cytoplasm. The enzyme catalyses L-methionine + ATP + H2O = S-adenosyl-L-methionine + phosphate + diphosphate. It participates in amino-acid biosynthesis; S-adenosyl-L-methionine biosynthesis; S-adenosyl-L-methionine from L-methionine: step 1/1. Catalyzes the formation of S-adenosylmethionine (AdoMet) from methionine and ATP. The overall synthetic reaction is composed of two sequential steps, AdoMet formation and the subsequent tripolyphosphate hydrolysis which occurs prior to release of AdoMet from the enzyme. This chain is S-adenosylmethionine synthase, found in Sulfurimonas denitrificans (strain ATCC 33889 / DSM 1251) (Thiomicrospira denitrificans (strain ATCC 33889 / DSM 1251)).